A 217-amino-acid polypeptide reads, in one-letter code: Cytidylate kinase (217 aa).

ATP is bound at residue 11–19; that stretch reads GPAGAGKST.

This sequence belongs to the cytidylate kinase family. Type 1 subfamily.

The protein localises to the cytoplasm. It catalyses the reaction CMP + ATP = CDP + ADP. The enzyme catalyses dCMP + ATP = dCDP + ADP. The sequence is that of Cytidylate kinase from Clostridium perfringens (strain SM101 / Type A).